The sequence spans 1084 residues: Cellulose synthase A catalytic subunit 2 [UDP-forming] (1084 aa).

The residue at position 1 (Met-1) is an N-acetylmethionine. At 1–278 (MNTGGRLIAG…RSSRINPYRM (278 aa)) the chain is on the cytoplasmic side. Residues Cys-39, Cys-42, Cys-58, Cys-61, Cys-66, Cys-69, Cys-81, and Cys-84 each coordinate Zn(2+). Residues 39-85 (CQICGDEIELTVSSELFVACNECAFPVCRPCYEYERREGNQACPQCK) form an RING-type; degenerate zinc finger. The segment at 230 to 259 (IKHEGGNNGRGSNDDDELDDPDMPMMDEGR) is disordered. A helical membrane pass occupies residues 279 to 299 (LILCRLAILGLFFHYRILHPV). The Extracellular portion of the chain corresponds to 300 to 301 (ND). The helical transmembrane segment at 302-322 (AYGLWLTSVICEIWFAVSWIL) threads the bilayer. The Cytoplasmic portion of the chain corresponds to 323–867 (DQFPKWYPIE…INSVVYPWTS (545 aa)). UDP-alpha-D-glucose-binding residues include Ser-361, Lys-367, Glu-368, and Asp-397. Asp-397 is a catalytic residue. A coiled-coil region spans residues 451-477 (VRERRAMKRDYEEFKVKINALVATAQK). Residue Lys-538 coordinates UDP-alpha-D-glucose. Mn(2+) contacts are provided by Lys-539 and Asp-563. Asp-784 is an active-site residue. Residues 868–888 (LPLIVYCSLPAVCLLTGKFIV) form a helical membrane-spanning segment. At 889 to 893 (PEISN) the chain is on the extracellular side. A helical membrane pass occupies residues 894–914 (YAGILFMLMFISIAVTGILEM). Over 915-929 (QWGGVGIDDWWRNEQ) the chain is Cytoplasmic. The chain crosses the membrane as a helical span at residues 930–950 (FWVIGGASSHLFALFQGLLKV). Topologically, residues 951 to 979 (LAGVNTNFTVTSKAADDGAFSELYIFKWT) are extracellular. An N-linked (GlcNAc...) asparagine glycan is attached at Asn-957. The helical transmembrane segment at 980-1000 (TLLIPPTTLLIINIIGVIVGV) threads the bilayer. The Cytoplasmic portion of the chain corresponds to 1001–1011 (SDAISNGYDSW). A helical membrane pass occupies residues 1012–1032 (GPLFGRLFFALWVIVHLYPFL). Topologically, residues 1033–1041 (KGMLGKQDK) are extracellular. Residues 1042–1062 (MPTIIVVWSILLASILTLLWV) traverse the membrane as a helical segment. Over 1063–1084 (RVNPFVAKGGPVLEICGLNCGN) the chain is Cytoplasmic.

The protein belongs to the glycosyltransferase 2 family. Plant cellulose synthase subfamily. As to quaternary structure, homodimer. Interaction through zinc finger domain. Mn(2+) is required as a cofactor. Zn(2+) serves as cofactor. In terms of tissue distribution, strongly and ubiquitously expressed. Localized in some dividing and expanding cells, as well as in vascular tissues.

It is found in the cell membrane. The catalysed reaction is [(1-&gt;4)-beta-D-glucosyl](n) + UDP-alpha-D-glucose = [(1-&gt;4)-beta-D-glucosyl](n+1) + UDP + H(+). It participates in glycan metabolism; plant cellulose biosynthesis. Functionally, catalytic subunit of cellulose synthase terminal complexes ('rosettes'), required for beta-1,4-glucan microfibril crystallization, a major mechanism of the cell wall formation. Involved in the primary cell wall formation. The polypeptide is Cellulose synthase A catalytic subunit 2 [UDP-forming] (Arabidopsis thaliana (Mouse-ear cress)).